The sequence spans 108 residues: UPF0060 membrane protein Nwi_1459 (108 aa).

4 helical membrane-spanning segments follow: residues 5 to 25, 31 to 51, 61 to 81, and 88 to 108; these read AAYVGAAIAEIAGCFAFWAWL, VWWLVPGMASLALFAYLLTLV, AAYGGIYIMASLGWLWSVEGI, and LAGALICLIGAVVILIGPHEI.

The protein belongs to the UPF0060 family.

The protein localises to the cell inner membrane. This chain is UPF0060 membrane protein Nwi_1459, found in Nitrobacter winogradskyi (strain ATCC 25391 / DSM 10237 / CIP 104748 / NCIMB 11846 / Nb-255).